We begin with the raw amino-acid sequence, 93 residues long: Large ribosomal subunit protein uL23 (93 aa).

The protein belongs to the universal ribosomal protein uL23 family. In terms of assembly, part of the 50S ribosomal subunit. Contacts protein L29, and trigger factor when it is bound to the ribosome.

In terms of biological role, one of the early assembly proteins it binds 23S rRNA. One of the proteins that surrounds the polypeptide exit tunnel on the outside of the ribosome. Forms the main docking site for trigger factor binding to the ribosome. The sequence is that of Large ribosomal subunit protein uL23 from Campylobacter jejuni subsp. jejuni serotype O:6 (strain 81116 / NCTC 11828).